The primary structure comprises 233 residues: Large ribosomal subunit protein uL1 (233 aa).

Belongs to the universal ribosomal protein uL1 family. As to quaternary structure, part of the 50S ribosomal subunit.

Binds directly to 23S rRNA. The L1 stalk is quite mobile in the ribosome, and is involved in E site tRNA release. In terms of biological role, protein L1 is also a translational repressor protein, it controls the translation of the L11 operon by binding to its mRNA. In Rhizobium johnstonii (strain DSM 114642 / LMG 32736 / 3841) (Rhizobium leguminosarum bv. viciae), this protein is Large ribosomal subunit protein uL1.